A 40-amino-acid polypeptide reads, in one-letter code: Chaperonin HSP60, mitochondrial (40 aa).

This sequence belongs to the chaperonin (HSP60) family.

Its subcellular location is the mitochondrion. In terms of biological role, implicated in mitochondrial protein import and macromolecular assembly. May facilitate the correct folding of imported proteins. May also prevent misfolding and promote the refolding and proper assembly of unfolded polypeptides generated under stress conditions in the mitochondrial matrix. In Solanum tuberosum (Potato), this protein is Chaperonin HSP60, mitochondrial.